A 565-amino-acid polypeptide reads, in one-letter code: Phosphomethylpyrimidine synthase (565 aa).

Substrate-binding positions include Asn203, Met232, Tyr261, His297, 317-319, 358-361, and Glu397; these read SRG and DGLR. A Zn(2+)-binding site is contributed by His401. Substrate is bound at residue Tyr424. A Zn(2+)-binding site is contributed by His465. Cys541, Cys544, and Cys549 together coordinate [4Fe-4S] cluster.

This sequence belongs to the ThiC family. [4Fe-4S] cluster is required as a cofactor.

It carries out the reaction 5-amino-1-(5-phospho-beta-D-ribosyl)imidazole + S-adenosyl-L-methionine = 4-amino-2-methyl-5-(phosphooxymethyl)pyrimidine + CO + 5'-deoxyadenosine + formate + L-methionine + 3 H(+). It participates in cofactor biosynthesis; thiamine diphosphate biosynthesis. Catalyzes the synthesis of the hydroxymethylpyrimidine phosphate (HMP-P) moiety of thiamine from aminoimidazole ribotide (AIR) in a radical S-adenosyl-L-methionine (SAM)-dependent reaction. The chain is Phosphomethylpyrimidine synthase from Bacteroides thetaiotaomicron (strain ATCC 29148 / DSM 2079 / JCM 5827 / CCUG 10774 / NCTC 10582 / VPI-5482 / E50).